The primary structure comprises 571 residues: MSFKMTQSQYTSLYGPTVGDSVRLGDTNLFARVEKDYATYGDEAAFGGGKSIRDGMAQNPNVTRDDKQVADLVITNALILDYDKIVKADIGVKNGYIMKIGKAGNPDIMDNVDIIIGATTDIISAEGKIVTAGGIDTHVHFVNPEQSQVALESGITTHIGGGTGASEGAKATTVTPGPWHLHRMLLAAESLPLNIGFTGKGQAVNHTALVEQIHAGAIGLKVHEDWGATPSALDHALQVADDYDVQIALHADTLNEAGFMEETMAAVKDRVLHMYHTEGAGGGHAPDLIKSAAYSNILPSSTNPTLPYTVNTIDEHLDMVMITHHLNASIPEDIAFADSRIRKETIAAEDVLQDIGVFSMVSSDSQAMGRVGEVITRTWQVAHRMKEQRGSLDGDSEYNDNNRIKRYIAKYTINPAITHGISDYVGSIDEGKLADIIMWEPAFFAVKPDVIVKGGLINPAINGDANGSIPTSEPLKYRKMYGQLGGNMQGTSMTFVSTTAYENDIGKLLGLKRKLRPVHNIRKLTKADMKNNSATPKIDVDPQTYEVFVDGEKITSEPATELPLTQRYFLF.

One can recognise a Urease domain in the interval 133-571; it reads GGIDTHVHFV…LPLTQRYFLF (439 aa). Residues His138, His140, and Lys221 each coordinate Ni(2+). At Lys221 the chain carries N6-carboxylysine. Substrate is bound at residue His223. Ni(2+) is bound by residues His250 and His276. His324 serves as the catalytic Proton donor. Position 364 (Asp364) interacts with Ni(2+).

Belongs to the metallo-dependent hydrolases superfamily. Urease alpha subunit family. Heterotrimer of UreA (gamma), UreB (beta) and UreC (alpha) subunits. Three heterotrimers associate to form the active enzyme. It depends on Ni cation as a cofactor. In terms of processing, carboxylation allows a single lysine to coordinate two nickel ions.

Its subcellular location is the cytoplasm. It catalyses the reaction urea + 2 H2O + H(+) = hydrogencarbonate + 2 NH4(+). It participates in nitrogen metabolism; urea degradation; CO(2) and NH(3) from urea (urease route): step 1/1. This chain is Urease subunit alpha, found in Staphylococcus xylosus.